We begin with the raw amino-acid sequence, 269 residues long: MIPLKIAIAGANGRMGRVLVEAVNNHPDTVLSGALEHSGSEALGLDAGYAVGLKTGIAISDDVDAVLAQSDVLIDFTRPEPTLKHLQKCVEKQVNIIIGTTGFDDAGKAAIRAAAEKTGIVFAANFSVGVNLTFHILDTVARVLNEGYDIEIIEGHHRHKVDAPSGTALRMGEVIAGALGRDLKQCAVYGREGHTGPRDPSTIGFATVRAGDIVGDHTALFATDGERVEITHKAGSRMTFAAGAVRAAVWVNGKTGLYDMQDVLGLNNR.

Residues 10–15 (GANGRM), Glu-36, 99–101 (GTT), and 123–126 (AANF) contribute to the NAD(+) site. His-156 serves as the catalytic Proton donor/acceptor. Residue His-157 participates in (S)-2,3,4,5-tetrahydrodipicolinate binding. The Proton donor role is filled by Lys-160. Residue 166–167 (GT) participates in (S)-2,3,4,5-tetrahydrodipicolinate binding.

This sequence belongs to the DapB family.

It is found in the cytoplasm. It carries out the reaction (S)-2,3,4,5-tetrahydrodipicolinate + NAD(+) + H2O = (2S,4S)-4-hydroxy-2,3,4,5-tetrahydrodipicolinate + NADH + H(+). It catalyses the reaction (S)-2,3,4,5-tetrahydrodipicolinate + NADP(+) + H2O = (2S,4S)-4-hydroxy-2,3,4,5-tetrahydrodipicolinate + NADPH + H(+). It participates in amino-acid biosynthesis; L-lysine biosynthesis via DAP pathway; (S)-tetrahydrodipicolinate from L-aspartate: step 4/4. Its function is as follows. Catalyzes the conversion of 4-hydroxy-tetrahydrodipicolinate (HTPA) to tetrahydrodipicolinate. The chain is 4-hydroxy-tetrahydrodipicolinate reductase from Neisseria gonorrhoeae (strain ATCC 700825 / FA 1090).